The sequence spans 447 residues: Tubulin alpha-2 chain (447 aa).

The GTP site is built by Gln11, Glu71, Gly144, Thr145, Thr179, Asn206, and Asn228. Glu71 lines the Mg(2+) pocket. The active site involves Glu254.

Belongs to the tubulin family. Dimer of alpha and beta chains. A typical microtubule is a hollow water-filled tube with an outer diameter of 25 nm and an inner diameter of 15 nM. Alpha-beta heterodimers associate head-to-tail to form protofilaments running lengthwise along the microtubule wall with the beta-tubulin subunit facing the microtubule plus end conferring a structural polarity. Microtubules usually have 13 protofilaments but different protofilament numbers can be found in some organisms and specialized cells. Mg(2+) is required as a cofactor. Post-translationally, undergoes a tyrosination/detyrosination cycle, the cyclic removal and re-addition of a C-terminal tyrosine residue by the enzymes tubulin tyrosine carboxypeptidase (TTCP) and tubulin tyrosine ligase (TTL), respectively.

It localises to the cytoplasm. It is found in the cytoskeleton. The enzyme catalyses GTP + H2O = GDP + phosphate + H(+). In terms of biological role, tubulin is the major constituent of microtubules, a cylinder consisting of laterally associated linear protofilaments composed of alpha- and beta-tubulin heterodimers. Microtubules grow by the addition of GTP-tubulin dimers to the microtubule end, where a stabilizing cap forms. Below the cap, tubulin dimers are in GDP-bound state, owing to GTPase activity of alpha-tubulin. The protein is Tubulin alpha-2 chain (TUBA2) of Eleusine indica (Goosegrass).